The primary structure comprises 172 residues: Endoribonuclease YbeY (172 aa).

Zn(2+) is bound by residues His-137, His-141, and His-147.

The protein belongs to the endoribonuclease YbeY family. Zn(2+) is required as a cofactor.

It is found in the cytoplasm. Its function is as follows. Single strand-specific metallo-endoribonuclease involved in late-stage 70S ribosome quality control and in maturation of the 3' terminus of the 16S rRNA. The protein is Endoribonuclease YbeY of Dehalococcoides mccartyi (strain ATCC BAA-2266 / KCTC 15142 / 195) (Dehalococcoides ethenogenes (strain 195)).